The chain runs to 471 residues: PTS system mannitol-specific EIICB component (471 aa).

The Cytoplasmic segment spans residues 1–29; that stretch reads MTHTSENQAGFRVKIQRFGSYLSGMIMPN. The region spanning 18-342 is the PTS EIIC type-2 domain; sequence FGSYLSGMIM…FFVASIFLKS (325 aa). Residues 30 to 51 form a helical membrane-spanning segment; sequence IGAFIAWGIITALFIPTGWLPN. Over 52–55 the chain is Extracellular; the sequence is ETFA. Residues 56–76 traverse the membrane as a helical segment; sequence KLVGPMITYLLPLLIGYTGGK. At 77–139 the chain is on the cytoplasmic side; that stretch reads MIYDVRGGVV…QGFEMLVNNF (63 aa). A helical membrane pass occupies residues 140–161; it reads SAGIIGGLLTLAAFKGVGPVVS. At 162–170 the chain is on the extracellular side; sequence AISKTLAAG. A helical membrane pass occupies residues 171–191; sequence VEKIVDLHLLPLANIFIEPGK. Residues 192 to 278 lie on the Cytoplasmic side of the membrane; the sequence is VLFLNNAINH…VLMRPILILA (87 aa). The chain crosses the membrane as a helical span at residues 279–298; that stretch reads AIAGGVSGVLTFTIFDAGLV. The Extracellular portion of the chain corresponds to 299-318; that stretch reads AVPSPGSIFALLAMTPKGNY. Residues 319 to 340 traverse the membrane as a helical segment; sequence LGVLAGVLVATAVSFFVASIFL. Residues 341-471 are Cytoplasmic-facing; that stretch reads KSAKNNEEDI…YDELIEMLKK (131 aa). The PTS EIIB type-2 domain maps to 383–471; it reads KKIVFACDAG…YDELIEMLKK (89 aa). Cysteine 389 (phosphocysteine intermediate; for EIIB activity) is an active-site residue. Phosphocysteine; by EIIA is present on cysteine 389.

In terms of assembly, homodimer.

It is found in the cell membrane. The catalysed reaction is D-mannitol(out) + N(pros)-phospho-L-histidyl-[protein] = D-mannitol 1-phosphate(in) + L-histidyl-[protein]. Functionally, the phosphoenolpyruvate-dependent sugar phosphotransferase system (sugar PTS), a major carbohydrate active transport system, catalyzes the phosphorylation of incoming sugar substrates concomitantly with their translocation across the cell membrane. The enzyme II CmtAB PTS system is involved in D-mannitol transport. In Geobacillus stearothermophilus (Bacillus stearothermophilus), this protein is PTS system mannitol-specific EIICB component.